The chain runs to 178 residues: Mediator of RNA polymerase II transcription subunit 30 (178 aa).

The segment at 1 to 22 (MSTPPLAASGMAPGPFAGPQAQ) is disordered. N-acetylserine is present on S2. The span at 10 to 22 (GMAPGPFAGPQAQ) shows a compositional bias: low complexity. Coiled coils occupy residues 70–94 (TYQD…KLRL) and 133–173 (RFAS…INAM).

Belongs to the Mediator complex subunit 30 family. As to quaternary structure, component of the Mediator complex, which is composed of MED1, MED4, MED6, MED7, MED8, MED9, MED10, MED11, MED12, MED13, MED13L, MED14, MED15, MED16, MED17, MED18, MED19, MED20, MED21, MED22, MED23, MED24, MED25, MED26, MED27, MED29, MED30, MED31, CCNC, CDK8 and CDC2L6/CDK11. The MED12, MED13, CCNC and CDK8 subunits form a distinct module termed the CDK8 module. Mediator containing the CDK8 module is less active than Mediator lacking this module in supporting transcriptional activation. Individual preparations of the Mediator complex lacking one or more distinct subunits have been variously termed ARC, CRSP, DRIP, PC2, SMCC and TRAP. As to expression, expressed in brain, heart, kidney, liver, lung, pancreas, placenta and skeletal muscle.

It localises to the nucleus. Functionally, component of the Mediator complex, a coactivator involved in the regulated transcription of nearly all RNA polymerase II-dependent genes. Mediator functions as a bridge to convey information from gene-specific regulatory proteins to the basal RNA polymerase II transcription machinery. Mediator is recruited to promoters by direct interactions with regulatory proteins and serves as a scaffold for the assembly of a functional preinitiation complex with RNA polymerase II and the general transcription factors. The chain is Mediator of RNA polymerase II transcription subunit 30 (MED30) from Homo sapiens (Human).